Here is a 276-residue protein sequence, read N- to C-terminus: NAD kinase (276 aa).

Asp-61 functions as the Proton acceptor in the catalytic mechanism. Residues 61 to 62 (DG), 134 to 135 (ND), Arg-145, Lys-162, Asp-164, Val-172, 175 to 180 (TAYSFS), and Gln-234 each bind NAD(+).

This sequence belongs to the NAD kinase family. The cofactor is a divalent metal cation.

It is found in the cytoplasm. The catalysed reaction is NAD(+) + ATP = ADP + NADP(+) + H(+). Involved in the regulation of the intracellular balance of NAD and NADP, and is a key enzyme in the biosynthesis of NADP. Catalyzes specifically the phosphorylation on 2'-hydroxyl of the adenosine moiety of NAD to yield NADP. This is NAD kinase from Clostridium perfringens (strain ATCC 13124 / DSM 756 / JCM 1290 / NCIMB 6125 / NCTC 8237 / Type A).